Consider the following 296-residue polypeptide: Glycine--tRNA ligase alpha subunit (296 aa).

Belongs to the class-II aminoacyl-tRNA synthetase family. As to quaternary structure, tetramer of two alpha and two beta subunits.

The protein resides in the cytoplasm. It catalyses the reaction tRNA(Gly) + glycine + ATP = glycyl-tRNA(Gly) + AMP + diphosphate. The chain is Glycine--tRNA ligase alpha subunit from Maricaulis maris (strain MCS10) (Caulobacter maris).